The chain runs to 177 residues: Baseplate hub assembly protein gp28 (177 aa).

The gp27 and gp28 proteins seem to combine to form a small hub precursor during morphogenesis.

Baseplate hub assembly chaperone involved in the tail assembly. This Enterobacteria phage T4 (Bacteriophage T4) protein is Baseplate hub assembly protein gp28 (28).